Reading from the N-terminus, the 210-residue chain is Regulator of G-protein signaling 17 (210 aa).

The tract at residues 1–21 (MRKRQQSQNEGTSAVSQAPGN) is disordered. The RGS domain maps to 84-200 (NFDKMMKTPA…LNSQIYKSLV (117 aa)).

As to quaternary structure, interacts with GNAI1 and GNAQ. Interacts with GNAZ and GNAI2. Forms a complex with mu-opioid receptors and G(alpha)z/i2 subunits, including GNAZ and GNAI2; the formation of this complex results in mu-opioid receptor desensitization. N- and O-glycosylated in synapsomal membranes. Post-translationally, serine phosphorylated in synapsomal membranes. In terms of processing, sumoylated with SUMO1 and SUM02 in synaptosomes. The sumoylated forms act as a scaffold for sequestering mu-opioid receptor-activated G(alpha) subunits.

It localises to the membrane. The protein localises to the synapse. It is found in the synaptosome. Its subcellular location is the nucleus. The protein resides in the cytoplasm. Its function is as follows. Regulates G protein-coupled receptor signaling cascades, including signaling via muscarinic acetylcholine receptor CHRM2 and dopamine receptor DRD2. Inhibits signal transduction by increasing the GTPase activity of G protein alpha subunits, thereby driving them into their inactive GDP-bound form. Binds selectively to GNAZ and GNAI2 subunits, accelerates their GTPase activity and regulates their signaling activities. Negatively regulates mu-opioid receptor-mediated activation of the G-proteins. This chain is Regulator of G-protein signaling 17 (RGS17), found in Gallus gallus (Chicken).